We begin with the raw amino-acid sequence, 281 residues long: Glycerol uptake facilitator protein (281 aa).

The Cytoplasmic portion of the chain corresponds to 1 to 5 (MSQTS). A helical transmembrane segment spans residues 6–34 (TLKGQCIAEFLGTGLLIFFGVGCVAALKV). Topologically, residues 35–39 (AGASF) are periplasmic. The helical transmembrane segment at 40–60 (GQWEISVIWGLGVAMAIYLTA) threads the bilayer. Residues 61–63 (GVS) are Cytoplasmic-facing. An intramembrane segment occupies 64–67 (GAHL). The NPA 1 motif lies at 68 to 70 (NPA). The segment at residues 68–78 (NPAVTIALWLF) is an intramembrane region (helical). Residues 79 to 84 (ACFDKR) lie on the Cytoplasmic side of the membrane. A helical membrane pass occupies residues 85–108 (KVIPFIVSQVAGAFCAAALVYGLY). Residues 109–143 (YNLFFDFEQTHHIVRGSVESVDLAGTFSTYPNPHI) lie on the Periplasmic side of the membrane. Residues 144–169 (NFVQAFAVEMVITAILMGLILALTDD) form a helical membrane-spanning segment. At 170 to 177 (GNGVPRGP) the chain is on the cytoplasmic side. The helical transmembrane segment at 178-194 (LAPLLIGLLIAVIGASM) threads the bilayer. The Periplasmic portion of the chain corresponds to 195 to 198 (GPLT). The stretch at 199–202 (GFAM) is an intramembrane region. The NPA 2 motif lies at 203-205 (NPA). An intramembrane region (helical) is located at residues 203 to 216 (NPARDFGPKVFAWL). The Periplasmic segment spans residues 217-231 (AGWGNVAFTGGRDIP). A helical transmembrane segment spans residues 232–254 (YFLVPLFSPIVGAIVGAFAYRKL). Topologically, residues 255–281 (IGRHLPCDICVVEEKETTTPSEQKASL) are cytoplasmic.

The protein belongs to the MIP/aquaporin (TC 1.A.8) family. In terms of assembly, homotetramer.

It is found in the cell inner membrane. It catalyses the reaction glycerol(in) = glycerol(out). In terms of biological role, mediates glycerol diffusion across the cytoplasmic membrane via a pore-type mechanism. The polypeptide is Glycerol uptake facilitator protein (glpF) (Shigella flexneri).